Here is a 163-residue protein sequence, read N- to C-terminus: Antimicrobial peptide 2 (163 aa).

Residues 1-22 form the signal peptide; that stretch reads MLNMKSFALLMLFATLVGVTIA. Chitin-binding type-1 domains follow at residues 26-66 and 69-107; these read NGKC…EIEP and AGQC…SCLP. Cystine bridges form between Cys-29/Cys-42, Cys-36/Cys-48, and Cys-41/Cys-55. Residues 58 to 67 constitute a propeptide that is removed on maturation; the sequence is NTPLSEIEPT. 4 cysteine pairs are disulfide-bonded: Cys-72-Cys-83, Cys-77-Cys-89, Cys-82-Cys-96, and Cys-101-Cys-105. Positions 100 to 163 are excised as a propeptide; that stretch reads MCQGSCLPDM…QVEPAVTKAP (64 aa).

As to expression, expressed in roots, flowers, stem and leaves.

In terms of biological role, antimicrobial peptide. In Stellaria media (Common chickweed), this protein is Antimicrobial peptide 2.